Consider the following 541-residue polypeptide: Arginine--tRNA ligase (541 aa).

The short motif at 119–129 is the 'HIGH' region element; it reads ANPTGPLHIGH.

It belongs to the class-I aminoacyl-tRNA synthetase family. Monomer.

It localises to the cytoplasm. The enzyme catalyses tRNA(Arg) + L-arginine + ATP = L-arginyl-tRNA(Arg) + AMP + diphosphate. This Helicobacter pylori (strain HPAG1) protein is Arginine--tRNA ligase.